The sequence spans 161 residues: RNA pyrophosphohydrolase (161 aa).

In terms of domain architecture, Nudix hydrolase spans 12–154 (PYRPGVGMMI…KRKLYQAVVK (143 aa)). The Nudix box signature appears at 46-67 (GGIVPGETPSIAAMREMLEEIG).

This sequence belongs to the Nudix hydrolase family. RppH subfamily. A divalent metal cation serves as cofactor.

In terms of biological role, accelerates the degradation of transcripts by removing pyrophosphate from the 5'-end of triphosphorylated RNA, leading to a more labile monophosphorylated state that can stimulate subsequent ribonuclease cleavage. The protein is RNA pyrophosphohydrolase of Rickettsia peacockii (strain Rustic).